We begin with the raw amino-acid sequence, 1430 residues long: 3'-5' RNA helicase YTHDC2 (1430 aa).

Residues 1–37 (MSRPSSVSPRQPAPGGGGGGGPSPCGPGGGGRAKGLK) are disordered. Positions 14–33 (PGGGGGGGPSPCGPGGGGRA) are enriched in gly residues. The 69-residue stretch at 38 to 106 (DIRIDEEVKI…NRYLTVKKKD (69 aa)) folds into the R3H domain. The Helicase ATP-binding domain maps to 203-369 (VKIIKENKVV…FGSCPVIYIQ (167 aa)). 216 to 223 (GETGSGKT) is an ATP binding site. The DEAH box motif lies at 316–319 (DEVH). 2 ANK repeats span residues 506–538 (TSAT…SKAS) and 539–571 (NGWM…FGNL). Positions 612 to 784 (LLYNICHSCD…ELCLHTKLLA (173 aa)) constitute a Helicase C-terminal domain. Ser-1089, Ser-1090, and Ser-1092 each carry phosphoserine. Residues 1164–1174 (EQSAGLQQPSG) are compositionally biased toward polar residues. The interval 1164-1288 (EQSAGLQQPS…SPSPRPNMPV (125 aa)) is disordered. A compositionally biased stretch (low complexity) spans 1191–1200 (SSWRSNNSRK). Position 1202 is a phosphoserine (Ser-1202). The segment covering 1231-1249 (KYKDRGILHPKRGTEDRSD) has biased composition (basic and acidic residues). Over residues 1250-1264 (QSSVKSTDSSSYPSP) the composition is skewed to low complexity. Phosphoserine occurs at positions 1263, 1267, and 1281. Residues 1288 to 1418 (VRYFIMKSSN…QVGEQLLQLW (131 aa)) enclose the YTH domain. Residues 1294 to 1296 (KSS), Trp-1310, and Trp-1360 each bind RNA.

It belongs to the DEAD box helicase family. DEAH subfamily. As to quaternary structure, interacts with MEIOC; binds transcripts that regulate the mitotic cell cycle inhibiting progression into metaphase, thereby allowing meiotic prophase to proceed normally. Interacts (via ANK repeats) with XRN1. Interacts with ZCCHC4. Associates with the small ribosomal subunit. Interacts with RBM46.

The protein localises to the cytoplasm. It localises to the perinuclear region. The enzyme catalyses ATP + H2O = ADP + phosphate + H(+). Its function is as follows. 3'-5' RNA helicase that plays a key role in the male and female germline by promoting transition from mitotic to meiotic divisions in stem cells. Specifically recognizes and binds N6-methyladenosine (m6A)-containing RNAs, a modification present at internal sites of mRNAs and some non-coding RNAs that plays a role in the efficiency of RNA processing and stability. Essential for ensuring a successful progression of the meiotic program in the germline by regulating the level of m6A-containing RNAs. Acts by binding and promoting degradation of m6A-containing mRNAs: the 3'-5' RNA helicase activity is required for this process and RNA degradation may be mediated by XRN1 exoribonuclease. Required for both spermatogenesis and oogenesis. This chain is 3'-5' RNA helicase YTHDC2, found in Pongo abelii (Sumatran orangutan).